The primary structure comprises 127 residues: Small ribosomal subunit protein uS13 (127 aa).

Residues 97 to 127 (PVRGQRTRTNARTRRGRRVTVAGKKKAPSKK) form a disordered region. Residues 101-127 (QRTRTNARTRRGRRVTVAGKKKAPSKK) are compositionally biased toward basic residues.

The protein belongs to the universal ribosomal protein uS13 family. As to quaternary structure, part of the 30S ribosomal subunit. Forms a loose heterodimer with protein S19. Forms two bridges to the 50S subunit in the 70S ribosome.

Its function is as follows. Located at the top of the head of the 30S subunit, it contacts several helices of the 16S rRNA. In the 70S ribosome it contacts the 23S rRNA (bridge B1a) and protein L5 of the 50S subunit (bridge B1b), connecting the 2 subunits; these bridges are implicated in subunit movement. Contacts the tRNAs in the A and P-sites. This Microcystis aeruginosa (strain NIES-843 / IAM M-2473) protein is Small ribosomal subunit protein uS13.